A 260-amino-acid chain; its full sequence is MVLIRVLANLLILQLSYAQKSSELIIGGDECNINEHRFLVALYTFRSRRFHCGGTLINQEWVLSAARCDRKNIRIKLGMHSTNVTNEDEQRRVPKEKFFCLSSKTYTQWNKDIMLIRLNSPVNNSTHIAPLSLPSNPPFVGSVCRIMGWGTITSPNETYPDVPHCANINLFNYTVCHGAHAGLPATSRTLCAGVLEGGKDTCKGDSGGPLICNGQFQGIVSWGGDPCAQPREPGVYTKVFDHLDWIQNIIAGNTTATCPL.

The signal sequence occupies residues 1-18; the sequence is MVLIRVLANLLILQLSYA. Positions 19 to 24 are excised as a propeptide; sequence QKSSEL. A Peptidase S1 domain is found at 25 to 251; sequence IIGGDECNIN…HLDWIQNIIA (227 aa). Disulfide bonds link Cys-31–Cys-165, Cys-52–Cys-68, Cys-100–Cys-258, Cys-144–Cys-212, Cys-176–Cys-191, and Cys-202–Cys-227. N-linked (GlcNAc...) asparagine glycosylation is found at Asn-83, Asn-123, Asn-124, Asn-156, and Asn-172. An N-linked (GlcNAc...) asparagine glycan is attached at Asn-253.

It belongs to the peptidase S1 family. Snake venom subfamily. In terms of tissue distribution, expressed by the venom gland.

Its subcellular location is the secreted. Its function is as follows. Snake venom serine protease homolog that may act in the hemostasis system of the prey. The protein is Snake venom serine protease homolog KN4 of Trimeresurus stejnegeri (Chinese green tree viper).